Consider the following 565-residue polypeptide: Molybdenum cofactor biosynthesis protein 1 (565 aa).

A molybdenum cofactor biosynthesis protein A region spans residues 3–367 (LLARHAIRLL…AVQRKKKQHA (365 aa)). In terms of domain architecture, Radical SAM core spans 64–276 (SFGRHHTYLR…LQIIRQRWPD (213 aa)). GTP is bound at residue Arg-73. 2 residues coordinate [4Fe-4S] cluster: Cys-80 and Cys-84. Tyr-86 is an S-adenosyl-L-methionine binding site. Cys-87 provides a ligand contact to [4Fe-4S] cluster. Residue Arg-123 coordinates GTP. S-adenosyl-L-methionine is bound at residue Gly-127. Residue Thr-154 coordinates GTP. Ser-178 lines the S-adenosyl-L-methionine pocket. Lys-214 lines the GTP pocket. Met-248 is an S-adenosyl-L-methionine binding site. [4Fe-4S] cluster is bound by residues Cys-311 and Cys-314. 316–318 (RLR) lines the GTP pocket. Residue Cys-328 participates in [4Fe-4S] cluster binding. Residue Asp-525 is the For molybdenum cofactor biosynthesis protein C activity of the active site.

It in the C-terminal section; belongs to the MoaC family. The protein in the N-terminal section; belongs to the radical SAM superfamily. MoaA family. Isoform Mocs1a and isoform Mocs1b probably form a heterooligomer. Requires [4Fe-4S] cluster as cofactor.

The enzyme catalyses GTP + AH2 + S-adenosyl-L-methionine = (8S)-3',8-cyclo-7,8-dihydroguanosine 5'-triphosphate + 5'-deoxyadenosine + L-methionine + A + H(+). The catalysed reaction is (8S)-3',8-cyclo-7,8-dihydroguanosine 5'-triphosphate = cyclic pyranopterin phosphate + diphosphate. It functions in the pathway cofactor biosynthesis; molybdopterin biosynthesis. Its function is as follows. Isoform Mocs1a and isoform Mocs1b probably form a complex that catalyzes the conversion of 5'-GTP to cyclic pyranopterin monophosphate (cPMP). Mocs1a catalyzes the cyclization of GTP to (8S)-3',8-cyclo-7,8-dihydroguanosine 5'-triphosphate and Mocs1b catalyzes the subsequent conversion of (8S)-3',8-cyclo-7,8-dihydroguanosine 5'-triphosphate to cPMP. The polypeptide is Molybdenum cofactor biosynthesis protein 1 (Mocs1) (Drosophila melanogaster (Fruit fly)).